Consider the following 164-residue polypeptide: 3-hydroxyacyl-[acyl-carrier-protein] dehydratase FabZ (164 aa).

H70 is a catalytic residue.

The protein belongs to the thioester dehydratase family. FabZ subfamily.

It is found in the cytoplasm. It carries out the reaction a (3R)-hydroxyacyl-[ACP] = a (2E)-enoyl-[ACP] + H2O. Its function is as follows. Involved in unsaturated fatty acids biosynthesis. Catalyzes the dehydration of short chain beta-hydroxyacyl-ACPs and long chain saturated and unsaturated beta-hydroxyacyl-ACPs. The sequence is that of 3-hydroxyacyl-[acyl-carrier-protein] dehydratase FabZ from Synechocystis sp. (strain ATCC 27184 / PCC 6803 / Kazusa).